Consider the following 111-residue polypeptide: Large ribosomal subunit protein uL22 (111 aa).

This sequence belongs to the universal ribosomal protein uL22 family. Part of the 50S ribosomal subunit.

In terms of biological role, this protein binds specifically to 23S rRNA; its binding is stimulated by other ribosomal proteins, e.g. L4, L17, and L20. It is important during the early stages of 50S assembly. It makes multiple contacts with different domains of the 23S rRNA in the assembled 50S subunit and ribosome. Its function is as follows. The globular domain of the protein is located near the polypeptide exit tunnel on the outside of the subunit, while an extended beta-hairpin is found that lines the wall of the exit tunnel in the center of the 70S ribosome. This chain is Large ribosomal subunit protein uL22, found in Xylella fastidiosa (strain 9a5c).